The primary structure comprises 361 residues: D-alanine--D-alanine ligase (361 aa).

Residues 140–345 (KHLFAQAGLD…YAELIEKLVA (206 aa)) enclose the ATP-grasp domain. 173 to 228 (EGELGYPCFVKPANLGSSVGISKCRSREELDQAFELAFQYDRKIVVEEGVIGREIE) provides a ligand contact to ATP. Mg(2+) is bound by residues Asp299, Glu312, and Asn314.

It belongs to the D-alanine--D-alanine ligase family. Mg(2+) serves as cofactor. Mn(2+) is required as a cofactor.

It is found in the cytoplasm. It catalyses the reaction 2 D-alanine + ATP = D-alanyl-D-alanine + ADP + phosphate + H(+). It functions in the pathway cell wall biogenesis; peptidoglycan biosynthesis. In terms of biological role, cell wall formation. The chain is D-alanine--D-alanine ligase from Bacillus licheniformis (strain ATCC 14580 / DSM 13 / JCM 2505 / CCUG 7422 / NBRC 12200 / NCIMB 9375 / NCTC 10341 / NRRL NRS-1264 / Gibson 46).